The following is a 442-amino-acid chain: Serum response factor-binding protein 1 (442 aa).

2 coiled-coil regions span residues 55-77 (EDAL…AMKE) and 118-140 (LLKR…RQNA). Disordered regions lie at residues 137–336 (RQNA…LETH) and 358–442 (FHSL…TFDD). 2 stretches are compositionally biased toward basic and acidic residues: residues 149-159 (ASKESQCEDIP) and 167-188 (ESQH…DPTT). Lys-202 is covalently cross-linked (Glycyl lysine isopeptide (Lys-Gly) (interchain with G-Cter in SUMO2)). Ser-215 is modified (phosphoserine). The span at 237–247 (GNHSQGKASTR) shows a compositional bias: polar residues. The span at 266–278 (VSEEEKEYFDDST) shows a compositional bias: acidic residues. A phosphoserine mark is found at Ser-277, Ser-292, and Ser-294. A Glycyl lysine isopeptide (Lys-Gly) (interchain with G-Cter in SUMO2) cross-link involves residue Lys-329. Phosphoserine is present on Ser-362. Positions 367-382 (SRRDPREQAPKNKAPD) are enriched in basic and acidic residues.

Interacts with SRF. Forms complexes with SRF and SRF cofactors ARID2, MYOCD and NKX2-5. Interacts with the N-terminus of SLC2A4.

It localises to the cytoplasm. The protein localises to the perinuclear region. May be involved in regulating transcriptional activation of cardiac genes during the aging process. May play a role in biosynthesis and/or processing of SLC2A4 in adipose cells. The chain is Serum response factor-binding protein 1 from Rattus norvegicus (Rat).